The primary structure comprises 184 residues: UPF0397 protein SAB2561c (184 aa).

Helical transmembrane passes span 11 to 31 (VVAIGIGAAVFVILGRFVVIP), 44 to 64 (AFLALISAIFGPFAGLMTGLV), 77 to 97 (AWWSWVICSGIIGCLYGWIGL), 111 to 131 (MIYFNIGQIIANIICWALIAP), and 148 to 168 (QGVISAVLNIISVGIIGTILL).

Belongs to the UPF0397 family.

It localises to the cell membrane. This chain is UPF0397 protein SAB2561c, found in Staphylococcus aureus (strain bovine RF122 / ET3-1).